A 1058-amino-acid polypeptide reads, in one-letter code: Protein translocase subunit SECA2, chloroplastic (1058 aa).

A chloroplast-targeting transit peptide spans 1–58 (MGSVSNLVSPNICHPAPPCLTSRSNKFPWTKPISGLLFYRSVTPIKRCHLVRRSCVVS). 167 to 174 (MKTGEGKT) is a binding site for ATP.

Belongs to the SecA family. In terms of assembly, part of a second Sec protein translocation apparatus. Interacts probably with SCY2.

The protein resides in the plastid. It is found in the chloroplast membrane. It carries out the reaction ATP + H2O + chloroplast-proteinSide 1 = ADP + phosphate + chloroplast-proteinSide 2.. Involved in protein export. Probably interacts with other proteins to allow the postimport or conservative sorting pathway for inner membrane proteins in plastids. May have a central role in coupling the hydrolysis of ATP to the transfer of proteins across the membrane. The polypeptide is Protein translocase subunit SECA2, chloroplastic (Arabidopsis thaliana (Mouse-ear cress)).